Reading from the N-terminus, the 95-residue chain is MILYAKVSSVENGYKYDQEAAKALIDDYGILTCFEVEKVYIDRSSSQVKLVKEDRKFNTVNFDFFIETEKGPLEYDIFKNPLGLECIVNTYHHKW.

This is an uncharacterized protein from Enterobacteria phage T4 (Bacteriophage T4).